Consider the following 220-residue polypeptide: dITP/XTP pyrophosphatase (220 aa).

13–18 contributes to the substrate binding site; sequence SHNAGK. Residues D45 and D74 each contribute to the Mg(2+) site. D74 serves as the catalytic Proton acceptor. Residues S75, 163–166, K186, and 199–200 contribute to the substrate site; these read FGYD and HR.

This sequence belongs to the HAM1 NTPase family. As to quaternary structure, homodimer. Requires Mg(2+) as cofactor.

It carries out the reaction XTP + H2O = XMP + diphosphate + H(+). The enzyme catalyses dITP + H2O = dIMP + diphosphate + H(+). It catalyses the reaction ITP + H2O = IMP + diphosphate + H(+). In terms of biological role, pyrophosphatase that catalyzes the hydrolysis of nucleoside triphosphates to their monophosphate derivatives, with a high preference for the non-canonical purine nucleotides XTP (xanthosine triphosphate), dITP (deoxyinosine triphosphate) and ITP. Seems to function as a house-cleaning enzyme that removes non-canonical purine nucleotides from the nucleotide pool, thus preventing their incorporation into DNA/RNA and avoiding chromosomal lesions. The protein is dITP/XTP pyrophosphatase of Mesorhizobium japonicum (strain LMG 29417 / CECT 9101 / MAFF 303099) (Mesorhizobium loti (strain MAFF 303099)).